The following is a 3420-amino-acid chain: MPNLANQDFTQFKREQQTAPAWFRILRGGRMTKWKGKVASYAPHVAPAIGWAFSRTLQLSLISLVMAGTAAASDRYWDSNGTAVGRGGSGAWNTSNAFWSPSGDGVSGPYSAWNNAAFDTAIFGGTAGTVTLGSPITVGAMTFETTGYILSGNTLTLGTATPTITTSSGTTTINSVLAGTNGLTKAGDGILSLTGANTFSGNIIVTGGTLSVNSSAALGAAANEISLANGAGLNSSGSLAGRSVTLTGGQAAIGGAGVGDAHFTGAGGLRASSSVTLSDDSNDYTGQTSLSSGGTLFFSSIGNLGEVSALGAPVDEAAGTISLVVGSSASASATYTGSGASSNRNWQLSSRFYANSTISNRGSGTLTLTGNIFNNHTNSSLSARNINFDAGTADIELLGTISSNNNGVGVVFGGTAGRTIKVSGDNTFGGAAIIQNITVQVGSLKNTGDPSALGTGTGAAGAISINSGILSYLGAGDSSDRNFTAQNNAILANDGTGALTLSGDVALTGTLTLGGSFAGTNTLAGTVSGTGNLRVDGAGSWILSSANTFTGDVGVNSGTLVVGNMQALGTTPKAATVNGGTLDLGAFDTTLSSLSGTGGNVNLGGATLTVKGSTSTDFAGSMTGSGNLLKQGTSTLTLTGASSFTGDTTINGGAISLNFKNATALTDNILSTSSTLNLAGGTFNVIGMDNAANSQTVDGLNVTTGNNKITTTSGSGGTLTLNLGAINRTGGFIDFGINADTTITTTSATLGGWATVNSTDYAKVDGGVIKALDESDYANKDDAGTWANGDIVSDAGGAANTPYFGTVGTGLQLGGLKYTAAANSTVTIAAGQTLGVNGTIIVANTVGNTNQTINGGSLTGITGGGVLGVLQTGTGTFTIQSTITDNGGAIGFTKAGAGSVTLTGQNTYSGVTTLSGGILTVTQMANAGMASGIGQSTADPANLMLESGTFRYTGGSVTTDRGFTLVNGGPARVIEVTGSGSNLAFSGLVTSPDDAGFEKKGAGTLTFLNGSNDYIGATTVSGGTLAVSTLADGGQVSSLGKSGSDATNLILAGGALNYLGSTTSSDRSFTLGAGNGSIGVANAGTTLSMSGTAVGTGGLTKLGDGTLILSGTNTYTGNTAVNAGVLRAGSAQAFGPSGLMTVGNGASLELGGYDITVSGLLGAGTVDLGGNTLTSSGSAANSFTGKITGTGGFTRTGGSTQTLSGCNSDYTGKTTIASNGTLSVDCLKNGGQASSIGASSNAPDNLVLNNGTLSYTGNTVTTDRGFTIQGGTGAISVTDAATTLTFSGQVVGTGALQKRGTGTLVLMNSNSYRGGTSVDAGTLRAGSSGAFGGGSMSLSNAAGAILDLDGFDTSVTSLSGGGALGGNVALGGATLTISSGNSNGTSYTGAITGIGNFVKNGNGTQRLTGCASSYSGSTTINGGVLEDSCLADGGSVSSIGMSSADADNLVINGGVLRYTGSGDSTDRQFTLGASGGNSIESEGTGAILFTSNAAVTFAAANTAQTLTLAGTNTDDNELGAQLTNNGSGITSLTKTDTGTWFLTNSDSTYTGVTKINGGVLSVDKLANGGLASSIGASSSAASNLIIGNDSTLRYLGTGDTTDRLFTLASGLTYIESSGSGAIVFTDTGQVALADNNQARTIALGGKNTGDNTLAGSIGDAGTGKTTLAKNDDGTWVLTGNNTFTGPTNINKGLLKIGNGGTTGSLTSDIVVTDGGLIFNRSDTLNYGGLISGAGFVTQSGSGTTILTGANSYTGATSVSAGTLLVNGDQSAATGQTSVANGSILGGSGIIGGNVVVTDGALAPGSNGAGTLTINGSLALSAGSILSMQLGQAGVAGGALNDLIEVKGNLTLDGTLDVAETAGGSYGPGIYRLINYTGSLTDNGLDIGMLPNGAGAIQTAVAGQVNLLAGGTNFNFWDGDVGPKFNSAVDGGNGTWQNSSGNNNWTDATGNINASYSDGAFAIFTGTAGTVTIDNSLGQVKAEGMQFAIDSYAVTGDKLELTGPQSTIRVGDGTTAGAAYIATINSVLTGNTQLEKTDAGTLVLTGANSYTGGTAINGGTIRISSDDNLGVASSDISFDGGALNTTANIATDRAIILTGAGTLLTDASTTLSLSGPISGTGALTKSGTGTLLLSGTAVHTGGTTITAGTLQIGNGGTDGSIDGNIVNNGALVFDRAGTLAYTGSISGTGTLTKNGSSTLTMTGTSTYTGETTVSAGTLALQAGGQIKGTASLTVDGGAEVLIDGSGSQFATGAGASVVGTGTVTVRDGGTASFDSLTTSNATGTNSTITVAGSGSQMTQTGIATFGLAGTATVDILDGGTMISSGASVFVGGQLPMDATGQVTISGAGSQWTIANALYARRGSITVDDGGVVTAGSAVIGYADTGINNPETDLVVTGAGSRFETTGELAITNSAANAARGSITIADGGVVKVGGGALAMGPGNAVLNIGAAAGGSPAHAGTLDAGTVTMAVGSNQINFNHDDASTTFSATISGAGSVSQNGPGATLLTGNNSYAGLTTVTAGSLYIDGDQSMATGLTTVNPGGTLGGTGTIGGDVTVASGGAINPGSFGMAPGTLNINGDLTLASGSTQSFSFGQANIPGGPLNDLINVGGDLVLAGTLQVDTSAGGTMDPGIYRVFNYTGTLSQNAWTVNLPSPDFYVQTSVAQQINLVNTAGLALRFWDGADPQNKNNGKIEGGNGIWQAFGSAPDNGNDNWTETGNINAPFQDATFAVFTGEKGTVTVDDSKGAINVSGIQFVTDGYIVNGDAINLVGASGSTIRVGDGTTGGTDTVASIDAEITGASQLIKADMGTLILTGDNSYTGGTKITGGTLQVAKDSALGARTGELILDGGTLNTTADMTIDRSVTVDQAGTLDIDTGTTLKIDGVLSGAGAFVKTGAGRLELAGDDHTYNGDASIASGTLALTGALGGTMNVGIDGRLEATGRVGATTNSGVIALDQEGFGSLTVNGNYTGKDGRLEIATVLGDDTSLTNRLVIDGDMAGTTQVSVTNRGGLGAQTVEGIKIIQVGGASNGMFLLAGDYMFNGEQAVVAGAYGYRLYKGGVSTPADGNWYLRSALLNPETPTNPTDPETPLYQPGVPLYESYAGSLQQLNKLGTLQQRVGNRVWAKHPVPAQSDENGAGPSGNNGIWARIEAAHAEFDPKQSTSRASYDADIWKFQTGIDGMFAETASGKFIGGVYVQYETVSSSVSSPFGNGSIESSGYGAGATLTWYGESDFYIDGVAQINWFDSDLNSATLGRQLVDGNRAVGYSLSVETGQKIEIGEGWSLTPQAQLAYSAIRFDDFKDAFDTSVSPENDHDLTGRLGLAINRDAEWLDAQGRRVAMHIYGIGNLYYGFAGASKVDVSSVRFVSGNERLRGGIGLGGTYDWADSKYSLYGETRFDTSLQNFGDSNVIAGSVGLRVRW.

The signal sequence occupies residues 1-72 (MPNLANQDFT…SLVMAGTAAA (72 aa)). In terms of domain architecture, Autotransporter spans 3138-3420 (GPSGNNGIWA…AGSVGLRVRW (283 aa)).

The protein localises to the cell surface. It is found in the cell outer membrane. Functionally, fibronectin-binding protein, which is involved in adhesion to host cells and in the infective process. Mediates the binding of B.suis to the extracellular matrix and to non-phagocytic cells via cell-associated fibronectin. This is Adhesin BmaC autotransporter from Brucella suis biovar 1 (strain 1330).